The sequence spans 225 residues: UPF0700 transmembrane protein RA0705 (225 aa).

6 consecutive transmembrane segments (helical) span residues 17 to 37, 66 to 86, 95 to 115, 117 to 137, 168 to 188, and 194 to 214; these read VGLA…AIGL, GLLL…GVMI, ALLF…QPEL, FVSL…IEGL, IIQI…AVLV, and LALW…FQIP.

This sequence belongs to the UPF0700 family.

The protein resides in the cell membrane. This Rhizobium meliloti (strain 1021) (Ensifer meliloti) protein is UPF0700 transmembrane protein RA0705.